We begin with the raw amino-acid sequence, 340 residues long: Protein B17 (340 aa).

It belongs to the orthopoxvirus B17 protein family.

This chain is Protein B17, found in Vaccinia virus (strain Copenhagen) (VACV).